Consider the following 406-residue polypeptide: Argininosuccinate synthase (406 aa).

ATP contacts are provided by residues 11–19 and A38; that span reads AYSGGLDTS. The L-citrulline site is built by Y91 and S96. Position 121 (G121) interacts with ATP. Positions 123, 127, and 128 each coordinate L-aspartate. L-citrulline is bound at residue N127. L-citrulline is bound by residues R131, S181, S190, E266, and Y278.

Belongs to the argininosuccinate synthase family. Type 1 subfamily. Homotetramer.

The protein resides in the cytoplasm. The enzyme catalyses L-citrulline + L-aspartate + ATP = 2-(N(omega)-L-arginino)succinate + AMP + diphosphate + H(+). The protein operates within amino-acid biosynthesis; L-arginine biosynthesis; L-arginine from L-ornithine and carbamoyl phosphate: step 2/3. The sequence is that of Argininosuccinate synthase from Campylobacter hominis (strain ATCC BAA-381 / DSM 21671 / CCUG 45161 / LMG 19568 / NCTC 13146 / CH001A).